The sequence spans 173 residues: MDTDINLKNLPYRRCVGVVVFNHEGKVWVGRRLTKYAHADTEMSHRWQLPQGGIDEGEEPLDAACRELYEETGIRSIKLIKEARDWFYYDFPQKLVGCTLKNKYRGQIQKWFAFQFTGKLSEIATNPPPDDNKAEFDQWKWVDLEALPSIVISFKKHVYRKVVSEFRGSFRCL.

The Nudix hydrolase domain maps to Pro11–Ser164. Positions Gly52 to Gly73 match the Nudix box motif.

This sequence belongs to the Nudix hydrolase family. RppH subfamily. Requires a divalent metal cation as cofactor.

In terms of biological role, accelerates the degradation of transcripts by removing pyrophosphate from the 5'-end of triphosphorylated RNA, leading to a more labile monophosphorylated state that can stimulate subsequent ribonuclease cleavage. This is RNA pyrophosphohydrolase from Bartonella quintana (strain Toulouse) (Rochalimaea quintana).